We begin with the raw amino-acid sequence, 513 residues long: Cobyric acid synthase (513 aa).

The region spanning 270–470 is the GATase cobBQ-type domain; sequence RLRIAIVAYP…THGLFESPAV (201 aa). Cys-351 (nucleophile) is an active-site residue. Residue His-462 is part of the active site.

This sequence belongs to the CobB/CobQ family. CobQ subfamily.

The protein operates within cofactor biosynthesis; adenosylcobalamin biosynthesis. Functionally, catalyzes amidations at positions B, D, E, and G on adenosylcobyrinic A,C-diamide. NH(2) groups are provided by glutamine, and one molecule of ATP is hydrogenolyzed for each amidation. This Leptothrix cholodnii (strain ATCC 51168 / LMG 8142 / SP-6) (Leptothrix discophora (strain SP-6)) protein is Cobyric acid synthase.